The sequence spans 84 residues: Small ribosomal subunit protein uS17 (84 aa).

The protein belongs to the universal ribosomal protein uS17 family. In terms of assembly, part of the 30S ribosomal subunit.

Functionally, one of the primary rRNA binding proteins, it binds specifically to the 5'-end of 16S ribosomal RNA. The sequence is that of Small ribosomal subunit protein uS17 from Clostridium botulinum (strain ATCC 19397 / Type A).